The primary structure comprises 863 residues: Leucine--tRNA ligase (863 aa).

The 'HIGH' region signature appears at 41-51 (PYPSGRIHIGH). The short motif at 627-631 (KMSKS) is the 'KMSKS' region element. Lysine 630 contacts ATP.

Belongs to the class-I aminoacyl-tRNA synthetase family.

It is found in the cytoplasm. It catalyses the reaction tRNA(Leu) + L-leucine + ATP = L-leucyl-tRNA(Leu) + AMP + diphosphate. In Jannaschia sp. (strain CCS1), this protein is Leucine--tRNA ligase.